Here is a 562-residue protein sequence, read N- to C-terminus: MKKFGKALLALLVLLLLAAALFLYWPLTQRSVPAASNDKPVDVVLVGAGIMSITLATYLQELQPDWNIQVYERLDGVAGESSDGWNNAGTGHSAFAELNYTPELPDGSIETKRAVGIAESFEVSRQFWSHQVKEGRLSQPSDFINPTPHMSFVWGDDNIAYLHKRQQALVKNPLFYGMQYSEDPAQIKQWAPLLMEGRDPKQKVAATWMPLGTDVNFGVITRQLTAGLQRSPNFSLHLNHEVSALRQNADKSWNVTVKDLKAGTESTTHARFVFIGAGGAALKLLQMSGIPESKDYAGFPVGGQFLAFQGQDVTSRHGVKAYGMAETGSPPMSVPHLDARKLDGKPVVLFGPFALYSTKFLKHGSWWDLYSSVNHNNVGPMLEVGKDNLDLVQYLMGQARLNDADRQAELVKYFPTAKPGDWKLVTAGQRVQIIKRDPLKGPVLQFGTEIVTDKDHTLAALLGASPGASTSPPIMLDLMAKAFPDQMKAGWEARLREIVPSYGRKLNDSAALVNEIRTLTSQTLHLPYLEVPVDANAASPAAAAVPAAAKEKRNANEELQAL.

It belongs to the MQO family. The cofactor is FAD.

It catalyses the reaction (S)-malate + a quinone = a quinol + oxaloacetate. Its pathway is carbohydrate metabolism; tricarboxylic acid cycle; oxaloacetate from (S)-malate (quinone route): step 1/1. In Stenotrophomonas maltophilia (strain K279a), this protein is Probable malate:quinone oxidoreductase.